The chain runs to 286 residues: Phosphoribosylaminoimidazole-succinocarboxamide synthase (286 aa).

The protein belongs to the SAICAR synthetase family.

It catalyses the reaction 5-amino-1-(5-phospho-D-ribosyl)imidazole-4-carboxylate + L-aspartate + ATP = (2S)-2-[5-amino-1-(5-phospho-beta-D-ribosyl)imidazole-4-carboxamido]succinate + ADP + phosphate + 2 H(+). The protein operates within purine metabolism; IMP biosynthesis via de novo pathway; 5-amino-1-(5-phospho-D-ribosyl)imidazole-4-carboxamide from 5-amino-1-(5-phospho-D-ribosyl)imidazole-4-carboxylate: step 1/2. This is Phosphoribosylaminoimidazole-succinocarboxamide synthase from Mannheimia succiniciproducens (strain KCTC 0769BP / MBEL55E).